Here is a 664-residue protein sequence, read N- to C-terminus: Putative carboxypeptidase suro-1 (664 aa).

The N-terminal stretch at 1-23 (MRYLCKSILLAVHTILLVGSVCC) is a signal peptide. Residues 24–110 (STDVHNTDDK…MSVPDVEKLI (87 aa)) constitute a propeptide, activation peptide. One can recognise a Peptidase M14 domain in the interval 160-473 (DYASYADMVK…EGFREVVDAV (314 aa)). Residues histidine 219 and glutamate 222 each coordinate Zn(2+). Substrate is bound by residues 219-222 (HARE), arginine 281, and 306-307 (NR). Histidine 361 contributes to the Zn(2+) binding site. 362 to 363 (SY) is a binding site for substrate. Glutamate 437 functions as the Proton donor/acceptor in the catalytic mechanism. Low complexity predominate over residues 512–543 (ASQAAGSTTRSTTTLKTSTTSVSTTSEATSPS). A disordered region spans residues 512-590 (ASQAAGSTTR…TTTTEEEDVT (79 aa)). Positions 564–573 (PTPPMAPPIM) are enriched in pro residues. The span at 574-583 (SPSTEFSTTT) shows a compositional bias: low complexity. In terms of domain architecture, ShKT spans 621-657 (CRDMRYSCGFWLKNNKQVCEEQQSFMRAQCAYTCKFC). Cystine bridges form between cysteine 621/cysteine 657, cysteine 628/cysteine 650, and cysteine 639/cysteine 654.

This sequence belongs to the peptidase M14 family. The cofactor is Zn(2+). As to expression, localizes in stripes along the cuticle.

It is found in the cytoplasmic vesicle. Its subcellular location is the secreted. May play a role in processing or organization of cuticle collagen proteins, including rol-6 and col-19. This chain is Putative carboxypeptidase suro-1, found in Caenorhabditis elegans.